Consider the following 551-residue polypeptide: Cytochrome c oxidase subunit 1 (551 aa).

The chain crosses the membrane as a helical span at residues 29–49; sequence VIGIQYLVTSFLFFFIGGSFA. Position 76 (histidine 76) interacts with Fe(II)-heme a. Helical transmembrane passes span 79–99, 113–133, 156–176, 205–225, 245–265, 283–303, 313–333, 348–368, 382–402, 424–444, and 466–486; these read IMIF…LIPL, AVAF…FFVG, LWIL…INFV, LILL…FDLI, LFWF…FGVI, IAYS…HHMF, MFFM…IFSW, MLFA…GVMV, FVVG…LFSG, FILT…LGLM, and IGAY…FWSL. Cu cation is bound by residues histidine 251, tyrosine 255, histidine 300, and histidine 301. The segment at residues 251–255 is a cross-link (1'-histidyl-3'-tyrosine (His-Tyr)); sequence HPAVY. Heme a3 is bound at residue histidine 386. Residue histidine 388 coordinates Fe(II)-heme a.

Belongs to the heme-copper respiratory oxidase family. Cu(2+) serves as cofactor. Heme is required as a cofactor.

The protein resides in the cell membrane. The enzyme catalyses 4 Fe(II)-[cytochrome c] + O2 + 8 H(+)(in) = 4 Fe(III)-[cytochrome c] + 2 H2O + 4 H(+)(out). It participates in energy metabolism; oxidative phosphorylation. In terms of biological role, cytochrome c oxidase is the component of the respiratory chain that catalyzes the reduction of oxygen to water. Subunits 1-3 form the functional core of the enzyme complex. CO I is the catalytic subunit of the enzyme. Electrons originating in cytochrome c are transferred via the copper A center of subunit 2 and heme A of subunit 1 to the bimetallic center formed by heme A3 and copper B. This is Cytochrome c oxidase subunit 1 (ctaD) from Synechocystis sp. (strain ATCC 27184 / PCC 6803 / Kazusa).